The primary structure comprises 1196 residues: RAB11-binding protein RELCH homolog (1196 aa).

3 disordered regions span residues 1–73 (MAAP…SPLN), 159–180 (ATAA…QLNR), and 195–225 (YSDD…SSPE). Gly residues predominate over residues 8–26 (SGPGGSSGGITGGAGGSLG). Residues 27–37 (VVGPSTSTSSV) show a composition bias toward low complexity. A compositionally biased stretch (acidic residues) spans 43 to 69 (DSEEEEDGGEEEEEEEEDDNEEDDEDV). Residues 169 to 180 (NTTASTGGQLNR) are compositionally biased toward polar residues. Positions 195–219 (YSDDGNRETDERVAENEVPLQERKN) are enriched in basic and acidic residues. A LisH domain is found at 234–266 (EKRALNFLVNEYLLKNNNKLTSITFSDENDDQD). A coiled-coil region spans residues 333–374 (IIKELEDKIILCNNEKAALLEQIGNLERQIESLQKENSASGV). Residues 370-393 (SASGVCSAAPPTSDRLQSQTSEES) are disordered. 2 HEAT repeats span residues 620 to 659 (VLAM…KYSQ) and 984 to 1022 (VVPA…LLER).

It is found in the recycling endosome. The protein localises to the golgi apparatus. The protein resides in the trans-Golgi network. Its function is as follows. May regulate intracellular cholesterol transport. The protein is RAB11-binding protein RELCH homolog (relch) of Xenopus tropicalis (Western clawed frog).